We begin with the raw amino-acid sequence, 430 residues long: Enolase (430 aa).

Position 165 (Q165) interacts with (2R)-2-phosphoglycerate. E207 functions as the Proton donor in the catalytic mechanism. Residues D244, E287, and D314 each contribute to the Mg(2+) site. Residues K339, R368, S369, and K390 each coordinate (2R)-2-phosphoglycerate. K339 acts as the Proton acceptor in catalysis.

This sequence belongs to the enolase family. Component of the RNA degradosome, a multiprotein complex involved in RNA processing and mRNA degradation. The cofactor is Mg(2+).

It localises to the cytoplasm. The protein resides in the secreted. The protein localises to the cell surface. The enzyme catalyses (2R)-2-phosphoglycerate = phosphoenolpyruvate + H2O. Its pathway is carbohydrate degradation; glycolysis; pyruvate from D-glyceraldehyde 3-phosphate: step 4/5. Catalyzes the reversible conversion of 2-phosphoglycerate (2-PG) into phosphoenolpyruvate (PEP). It is essential for the degradation of carbohydrates via glycolysis. The sequence is that of Enolase from Xylella fastidiosa (strain M23).